The chain runs to 266 residues: Probable phosphoadenosine phosphosulfate reductase (266 aa).

Residues 219–246 (TQPVREGEDERAGRWRGREKTECGLHSH) form a disordered region. The span at 223–243 (REGEDERAGRWRGREKTECGL) shows a compositional bias: basic and acidic residues.

This sequence belongs to the PAPS reductase family. CysH subfamily.

Its subcellular location is the cytoplasm. The protein resides in the nucleus. The enzyme catalyses [thioredoxin]-disulfide + sulfite + adenosine 3',5'-bisphosphate + 2 H(+) = [thioredoxin]-dithiol + 3'-phosphoadenylyl sulfate. It functions in the pathway sulfur metabolism; hydrogen sulfide biosynthesis; sulfite from sulfate: step 3/3. Its function is as follows. The NADP dependent reduction of PAPS into sulfite involves thioredoxin which probably plays the role of a thiol carrier. Required for methionine synthesis. The protein is Probable phosphoadenosine phosphosulfate reductase (met16) of Schizosaccharomyces pombe (strain 972 / ATCC 24843) (Fission yeast).